The primary structure comprises 309 residues: MILTVTLNPAIDVSYPLNELKCDTVNRVVDVTKTPGGKGLNVSRVLNDFGETVKATGCIGGESGDFIINHLPDSILSRFYKISGDTRTCIAILHEGNQTEILEKGPLLSVDEIDGFTHHFKYLLNDVDVVTLSGSLPAGMPDDYYQKLIKIANLNGKKTVLDCSGNALEAVLKGDSKPTVIKPNLEELSQLLGKEMTKDFEALKEVLQDELFEGIEWIIVSLGADGVFAKHKDTFYNVDIPKIKIVSAVGSGDSTVAGIASGLANDEDDRALLTKANVLGMLNAQEKTTGHVNMANYDKLYQSIKIKEV.

It belongs to the carbohydrate kinase PfkB family. LacC subfamily.

The enzyme catalyses D-tagatofuranose 6-phosphate + ATP = D-tagatofuranose 1,6-bisphosphate + ADP + H(+). It functions in the pathway carbohydrate metabolism; D-tagatose 6-phosphate degradation; D-glyceraldehyde 3-phosphate and glycerone phosphate from D-tagatose 6-phosphate: step 1/2. The chain is Tagatose-6-phosphate kinase from Streptococcus pyogenes serotype M2 (strain MGAS10270).